A 421-amino-acid polypeptide reads, in one-letter code: ATP-dependent RNA helicase RhlB (421 aa).

A Q motif motif is present at residues 9 to 37 (QKFSDFALHPKVVEALEKKGFHNCTPIQA). In terms of domain architecture, Helicase ATP-binding spans 40-219 (LPLTLAGRDV…FEQMNNAEYI (180 aa)). Position 53–60 (53–60 (AQTGTGKT)) interacts with ATP. A DEAD box motif is present at residues 165 to 168 (DEAD). Residues 245 to 390 (RLLQTLIEEE…VSKYNPDALM (146 aa)) form the Helicase C-terminal domain. The segment at 392–421 (DLPKPLRLTRPRTGNGPRRTGAPRNRRRSG) is disordered. Residues 402–414 (PRTGNGPRRTGAP) are compositionally biased toward low complexity.

Belongs to the DEAD box helicase family. RhlB subfamily. As to quaternary structure, component of the RNA degradosome, which is a multiprotein complex involved in RNA processing and mRNA degradation.

Its subcellular location is the cytoplasm. It catalyses the reaction ATP + H2O = ADP + phosphate + H(+). Its function is as follows. DEAD-box RNA helicase involved in RNA degradation. Has RNA-dependent ATPase activity and unwinds double-stranded RNA. This Escherichia coli O139:H28 (strain E24377A / ETEC) protein is ATP-dependent RNA helicase RhlB.